The chain runs to 235 residues: Elongation factor Tu (235 aa).

In terms of domain architecture, tr-type G spans 1 to 125 (KNMITGATQM…DGDKYIPTPS (125 aa)). 47 to 50 (NKQD) lines the GTP pocket.

This sequence belongs to the TRAFAC class translation factor GTPase superfamily. Classic translation factor GTPase family. EF-Tu/EF-1A subfamily. Monomer.

The protein resides in the cytoplasm. It catalyses the reaction GTP + H2O = GDP + phosphate + H(+). Its function is as follows. GTP hydrolase that promotes the GTP-dependent binding of aminoacyl-tRNA to the A-site of ribosomes during protein biosynthesis. This Leptolyngbya boryana (Plectonema boryanum) protein is Elongation factor Tu (tufA).